The primary structure comprises 564 residues: NAD-dependent malic enzyme (564 aa).

Catalysis depends on Tyr-104, which acts as the Proton donor. Residue Arg-157 coordinates NAD(+). Lys-175 functions as the Proton acceptor in the catalytic mechanism. Positions 246, 247, and 270 each coordinate a divalent metal cation. 2 residues coordinate NAD(+): Asp-270 and Asn-417.

The protein belongs to the malic enzymes family. Homotetramer. Mg(2+) is required as a cofactor. It depends on Mn(2+) as a cofactor.

The enzyme catalyses (S)-malate + NAD(+) = pyruvate + CO2 + NADH. The catalysed reaction is oxaloacetate + H(+) = pyruvate + CO2. This is NAD-dependent malic enzyme from Aeromonas hydrophila subsp. hydrophila (strain ATCC 7966 / DSM 30187 / BCRC 13018 / CCUG 14551 / JCM 1027 / KCTC 2358 / NCIMB 9240 / NCTC 8049).